Here is a 335-residue protein sequence, read N- to C-terminus: Dolichyl-diphosphooligosaccharide--protein glycosyltransferase subunit MAGT1 (335 aa).

Positions 1 to 29 (MASPRWFWSVCAIAAVALLLVSKVPSASA) are cleaved as a signal peptide. At 30-184 (QRKKEMVLSE…DVNIRVIRPP (155 aa)) the chain is on the extracellular side. Residues 47 to 175 (WANKRPVIRM…IARWIADRTD (129 aa)) form the Thioredoxin domain. The N-linked (GlcNAc...) asparagine glycan is linked to asparagine 71. Cysteine 87 and cysteine 90 form a disulfide bridge. Residues 185 to 205 (NYAGPLMLGLLLAVIGGLVYL) traverse the membrane as a helical segment. Topologically, residues 206–209 (RRSN) are cytoplasmic. A helical transmembrane segment spans residues 210-230 (MEFLFNKTGWAFAALCFVLAM). Over 231–270 (TSGQMWNHIRGPPYAHKNPHTGHVNYIHGSSQAQFVAETH) the chain is Extracellular. Residues 271-291 (IVLLFNGGVTLGMVLLCEAAT) traverse the membrane as a helical segment. The Cytoplasmic segment spans residues 292-300 (SDMDIGKRR). The helical transmembrane segment at 301–321 (MMCIAGIGLVVLFFSWMLSIF) threads the bilayer. The Extracellular portion of the chain corresponds to 322–335 (RSKYHGYPYSFLMS).

The protein belongs to the OST3/OST6 family. As to quaternary structure, accessory component of the STT3B-containing form of the oligosaccharyltransferase (OST) complex. OST exists in two different complex forms which contain common core subunits RPN1, RPN2, OST48, OST4, DAD1 and TMEM258, either STT3A or STT3B as catalytic subunits, and form-specific accessory subunits. OST can form stable complexes with the Sec61 complex or with both the Sec61 and TRAP complexes. The association of TUSC3 or MAGT1 with the STT3B-containing complex seems to be mutually exclusvice. In terms of tissue distribution, expressed at high levels in kidney, colon, heart and liver. Expressed at lower levels in intestine, spleen, brain and lung.

The protein resides in the cell membrane. The protein localises to the endoplasmic reticulum. Its subcellular location is the endoplasmic reticulum membrane. It participates in protein modification; protein glycosylation. Functionally, accessory component of the STT3B-containing form of the N-oligosaccharyl transferase (OST) complex which catalyzes the transfer of a high mannose oligosaccharide from a lipid-linked oligosaccharide donor to an asparagine residue within an Asn-X-Ser/Thr consensus motif in nascent polypeptide chains. Involved in N-glycosylation of STT3B-dependent substrates. Specifically required for the glycosylation of a subset of acceptor sites that are near cysteine residues; in this function seems to act redundantly with TUSC3. In its oxidized form proposed to form transient mixed disulfides with a glycoprotein substrate to facilitate access of STT3B to the unmodified acceptor site. Also has oxidoreductase-independent functions in the STT3B-containing OST complex possibly involving substrate recognition. Could indirectly play a role in Mg(2+) transport in epithelial cells. The chain is Dolichyl-diphosphooligosaccharide--protein glycosyltransferase subunit MAGT1 from Mus musculus (Mouse).